A 188-amino-acid chain; its full sequence is MQELKDRILAEGEVIGTHILKVDTFLNHQIDPAFILRMGKELADRFAGAGITRVLTVEASGIAVASAVALSLNVPVVFAKKKQASTQSDVYTSQIYSFTRQESVNITVSKKFLPADDVVLIVDDFLAHGEALKGLVDIVRQSGAGLAGAGIVIEKLFQRGGAALRAEGMRIETLAAIERMEPGKIVFA.

Xanthine is bound by residues leucine 20 and asparagine 27. A 5-phospho-alpha-D-ribose 1-diphosphate-binding site is contributed by 127-131 (AHGEA). Lysine 155 contacts xanthine.

This sequence belongs to the purine/pyrimidine phosphoribosyltransferase family. Xpt subfamily. As to quaternary structure, homodimer.

It localises to the cytoplasm. It catalyses the reaction XMP + diphosphate = xanthine + 5-phospho-alpha-D-ribose 1-diphosphate. It functions in the pathway purine metabolism; XMP biosynthesis via salvage pathway; XMP from xanthine: step 1/1. In terms of biological role, converts the preformed base xanthine, a product of nucleic acid breakdown, to xanthosine 5'-monophosphate (XMP), so it can be reused for RNA or DNA synthesis. The chain is Xanthine phosphoribosyltransferase from Heliobacterium modesticaldum (strain ATCC 51547 / Ice1).